The chain runs to 131 residues: Ribonuclease P protein component (131 aa).

Belongs to the RnpA family. Consists of a catalytic RNA component (M1 or rnpB) and a protein subunit.

The enzyme catalyses Endonucleolytic cleavage of RNA, removing 5'-extranucleotides from tRNA precursor.. Its function is as follows. RNaseP catalyzes the removal of the 5'-leader sequence from pre-tRNA to produce the mature 5'-terminus. It can also cleave other RNA substrates such as 4.5S RNA. The protein component plays an auxiliary but essential role in vivo by binding to the 5'-leader sequence and broadening the substrate specificity of the ribozyme. This is Ribonuclease P protein component from Stutzerimonas stutzeri (strain A1501) (Pseudomonas stutzeri).